Consider the following 118-residue polypeptide: UPF0382 membrane protein C1782.12c (118 aa).

An N-terminal signal peptide occupies residues methionine 1–glycine 18. The Lumenal segment spans residues alanine 19–threonine 40. A helical transmembrane segment spans residues alanine 41–tyrosine 61. The Cytoplasmic segment spans residues glycine 62–threonine 67. A helical membrane pass occupies residues glycine 68–leucine 88. Residues proline 89–arginine 96 lie on the Lumenal side of the membrane. Residues isoleucine 97 to leucine 117 form a helical membrane-spanning segment. Residue valine 118 is a topological domain, cytoplasmic.

It belongs to the UPF0382 family.

The protein localises to the endoplasmic reticulum membrane. This chain is UPF0382 membrane protein C1782.12c, found in Schizosaccharomyces pombe (strain 972 / ATCC 24843) (Fission yeast).